Reading from the N-terminus, the 99-residue chain is uncharacterized protein (99 aa).

This is an uncharacterized protein from Haemophilus influenzae (strain ATCC 51907 / DSM 11121 / KW20 / Rd).